The sequence spans 436 residues: Trigger factor (436 aa).

The region spanning 163-248 is the PPIase FKBP-type domain; that stretch reads GDRATIDFEG…VKKIEAAHLP (86 aa).

Belongs to the FKBP-type PPIase family. Tig subfamily.

It is found in the cytoplasm. The catalysed reaction is [protein]-peptidylproline (omega=180) = [protein]-peptidylproline (omega=0). In terms of biological role, involved in protein export. Acts as a chaperone by maintaining the newly synthesized protein in an open conformation. Functions as a peptidyl-prolyl cis-trans isomerase. The polypeptide is Trigger factor (Polaromonas sp. (strain JS666 / ATCC BAA-500)).